A 257-amino-acid polypeptide reads, in one-letter code: Zinc transporter ZupT (257 aa).

The next 5 membrane-spanning stretches (helical) occupy residues 5–25 (LILT…AVLG), 32–52 (VLAF…LMEM), 61–81 (GMSP…YFGL), 109–129 (AILL…ATFV), and 137–157 (LGMG…LAVA). Residues Asn120 and Glu123 each contribute to the Fe(2+) site. Zn(2+)-binding residues include Glu123 and His148. Asn149, Glu152, and Glu181 together coordinate Fe(2+). Position 152 (Glu152) interacts with Zn(2+). 3 helical membrane passes run 182–202 (ILGG…VVMA), 203–223 (AVMA…LMPL), and 236–256 (GVLC…TAGI).

The protein belongs to the ZIP transporter (TC 2.A.5) family. ZupT subfamily.

The protein resides in the cell inner membrane. The enzyme catalyses Zn(2+)(in) = Zn(2+)(out). Mediates zinc uptake. May also transport other divalent cations. The polypeptide is Zinc transporter ZupT (Escherichia fergusonii (strain ATCC 35469 / DSM 13698 / CCUG 18766 / IAM 14443 / JCM 21226 / LMG 7866 / NBRC 102419 / NCTC 12128 / CDC 0568-73)).